The following is a 186-amino-acid chain: Elongation factor P (186 aa).

It belongs to the elongation factor P family.

It localises to the cytoplasm. The protein operates within protein biosynthesis; polypeptide chain elongation. Functionally, involved in peptide bond synthesis. Stimulates efficient translation and peptide-bond synthesis on native or reconstituted 70S ribosomes in vitro. Probably functions indirectly by altering the affinity of the ribosome for aminoacyl-tRNA, thus increasing their reactivity as acceptors for peptidyl transferase. The sequence is that of Elongation factor P from Acidobacterium capsulatum (strain ATCC 51196 / DSM 11244 / BCRC 80197 / JCM 7670 / NBRC 15755 / NCIMB 13165 / 161).